Here is a 22-residue protein sequence, read N- to C-terminus: Thylakoid lumenal 11 kDa protein (22 aa).

Positions 1–22 (FKGGGPYGQGVTRGQDLSGKDF) are disordered.

The protein to A.thaliana At2g44920.

Its subcellular location is the plastid. It localises to the chloroplast thylakoid lumen. This chain is Thylakoid lumenal 11 kDa protein, found in Spinacia oleracea (Spinach).